Consider the following 252-residue polypeptide: Secreted LysM effector LysM1 (252 aa).

One can recognise a LysM 1 domain in the interval 20–64 (FAIPGDPGDTCDTLSDRWGITIDIFKSLNPGVNCPNLVANMEYCV). Positions 71–98 (DTPSTTTTAKPTMTPTSTPTKTTTTSTA) are disordered. Over residues 72 to 98 (TPSTTTTAKPTMTPTSTPTKTTTTSTA) the composition is skewed to low complexity. 2 LysM domains span residues 126-172 (KFHL…YVCV) and 204-250 (KFHL…YVCI).

The protein belongs to the secreted LysM effector family.

It is found in the secreted. It localises to the cell wall. Secreted effector that binds two substrates, chitin and N-linked oligosaccharides associated with human skin glycoproteins. Could provide the pathogen with three important functions including shielding host cell wall chitin from the human immune system, shielding the pathogen's glycoproteins from host degradation and immune surveillance, and helping facilitate pathogen adhesion to human skin. The polypeptide is Secreted LysM effector LysM1 (Trichophyton rubrum (strain ATCC MYA-4607 / CBS 118892) (Athlete's foot fungus)).